An 878-amino-acid polypeptide reads, in one-letter code: E3 ubiquitin-protein ligase SH3RF3 (878 aa).

Residues 19-40 (RGEGEDRQGEQQRGAQARTEED) form a disordered region. The RING-type zinc finger occupies 52–93 (CSVCLERLDTTAKVLPCQHTFCRRCLESIVCSRHELRCPECR). The segment at 120-145 (PRTGASPGSSPPARPGPGTFSALAGG) is disordered. SH3 domains are found at residues 187 to 246 (SQLP…CVRP) and 249 to 312 (QALP…LNDS). The interaction with RAC1 stretch occupies residues 364–433 (RVDSKKNAKK…TVPTQDSSSA (70 aa)). Phosphoserine is present on Ser395. Residues 458-519 (LPLNVYLALY…PGNYVTPVSR (62 aa)) enclose the SH3 3 domain. 2 disordered regions span residues 574–659 (QHPA…CPRP) and 688–758 (PISG…MGPE). 4 stretches are compositionally biased toward polar residues: residues 590-609 (AQPTASQAGDTTIPTATHAS), 618-633 (ATVSPLRTQTSPSRLP), 643-653 (ASPQHGQQSPA), and 690-699 (SGLSTPSLIN). A compositionally biased stretch (basic and acidic residues) spans 703 to 716 (KPDDKKNEKKEKKS). The span at 741–752 (HDPQSAMDTSLQ) shows a compositional bias: polar residues. At Ser792 the chain carries Phosphoserine. The region spanning 819–878 (LPRERYRVVVSYPPQSEAEIELKEGDIVFVHKKHEDGWFKGTLQRNGRTGLFPGSFVESF) is the SH3 4 domain.

Belongs to the SH3RF family. In terms of assembly, interacts (via SH3 domain 3) with PAK2. Interacts with RAC1 (GTP-bound form). Post-translationally, autoubiquitinated.

It carries out the reaction S-ubiquitinyl-[E2 ubiquitin-conjugating enzyme]-L-cysteine + [acceptor protein]-L-lysine = [E2 ubiquitin-conjugating enzyme]-L-cysteine + N(6)-ubiquitinyl-[acceptor protein]-L-lysine.. It functions in the pathway protein modification; protein ubiquitination. Has E3 ubiquitin-protein ligase activity. This Mus musculus (Mouse) protein is E3 ubiquitin-protein ligase SH3RF3 (Sh3rf3).